The following is a 142-amino-acid chain: Galectin-10 (142 aa).

Ser-2 carries the post-translational modification N-acetylserine. The region spanning 6-138 (VPYTEAASLS…DISLTKFNVS (133 aa)) is the Galectin domain.

As to quaternary structure, interacts with CEL. As to expression, expressed abundantly in the bone marrow. Expressed exclusively by eosinophils and basophils. Not detected in monocytes and neutrophils. Expressed in CD25-positive regulatory T-cells (Treg) (at protein level). Found in intestinal tissue from patients with Celiac disease, expression is directly related to the histological grade of mucosal damage and to the number of eosinophils found in the duodenal lesion (at protein level). Found in sputum of patients with eosinophilic inflammatory diseases such as asthma (at protein level).

It is found in the cytoplasm. The protein localises to the cytosol. It localises to the cytoplasmic granule. Functionally, regulates immune responses through the recognition of cell-surface glycans. Essential for the anergy and suppressive function of CD25-positive regulatory T-cells (Treg). The polypeptide is Galectin-10 (CLC) (Homo sapiens (Human)).